We begin with the raw amino-acid sequence, 910 residues long: Protein translocase subunit SecA (910 aa).

ATP is bound by residues glutamine 87, 105–109, and aspartate 501; that span reads GEGKT. Zn(2+) is bound by residues cysteine 894, cysteine 896, cysteine 905, and histidine 906.

Belongs to the SecA family. Monomer and homodimer. Part of the essential Sec protein translocation apparatus which comprises SecA, SecYEG and auxiliary proteins SecDF-YajC and YidC. Zn(2+) serves as cofactor.

Its subcellular location is the cell inner membrane. It localises to the cytoplasm. The enzyme catalyses ATP + H2O + cellular proteinSide 1 = ADP + phosphate + cellular proteinSide 2.. Its function is as follows. Part of the Sec protein translocase complex. Interacts with the SecYEG preprotein conducting channel. Has a central role in coupling the hydrolysis of ATP to the transfer of proteins into and across the cell membrane, serving both as a receptor for the preprotein-SecB complex and as an ATP-driven molecular motor driving the stepwise translocation of polypeptide chains across the membrane. The polypeptide is Protein translocase subunit SecA (Acidiphilium cryptum (strain JF-5)).